The primary structure comprises 317 residues: Small ribosomal subunit protein RACK1 (317 aa).

WD repeat units follow at residues glycine 13–lysine 44, glycine 61–aspartate 91, glycine 103–asparagine 133, serine 146–asparagine 178, glycine 190–aspartate 220, aspartate 231–aspartate 260, and alanine 281–glutamine 311.

The protein belongs to the WD repeat G protein beta family. Ribosomal protein RACK1 subfamily.

It localises to the cytoplasm. Its function is as follows. Involved in the recruitment, assembly and/or regulation of a variety of signaling molecules. Interacts with a wide variety of proteins and plays a role in many cellular processes. Required for VANGL2 membrane localization, inhibits Wnt signaling and regulates cellular polarization and oriented cell division during gastrulation. In Danio rerio (Zebrafish), this protein is Small ribosomal subunit protein RACK1 (gnb2l1).